The primary structure comprises 333 residues: Nucleoid-associated protein APJL_0454 (333 aa).

The protein belongs to the YejK family.

It is found in the cytoplasm. Its subcellular location is the nucleoid. This Actinobacillus pleuropneumoniae serotype 3 (strain JL03) protein is Nucleoid-associated protein APJL_0454.